A 421-amino-acid chain; its full sequence is Probable UDP-arabinose 4-epimerase 1 (421 aa).

Residues 1 to 33 (MLPTNRNRPQQRPARSWYFISDMDFSDPKRKPR) lie on the Cytoplasmic side of the membrane. The chain crosses the membrane as a helical; Signal-anchor for type II membrane protein span at residues 34–53 (YLSKILMVALLTAMCVVMLT). At 54–421 (QPPCHRRTPS…GYGPPQAMVL (368 aa)) the chain is on the lumenal side. NAD(+) is bound at residue 74–105 (HVLVTGGAGYIGSHAALRLLKDSFRVTIVDNL). Tyr-222 functions as the Proton acceptor in the catalytic mechanism.

It belongs to the NAD(P)-dependent epimerase/dehydratase family. NAD(+) serves as cofactor.

It localises to the golgi apparatus. It is found in the golgi stack membrane. It carries out the reaction UDP-beta-L-arabinopyranose = UDP-alpha-D-xylose. Its pathway is nucleotide-sugar biosynthesis; UDP-L-arabinose biosynthesis; UDP-L-arabinose from UDP-alpha-D-xylose: step 1/1. It participates in cell wall biogenesis; cell wall polysaccharide biosynthesis. In Oryza sativa subsp. japonica (Rice), this protein is Probable UDP-arabinose 4-epimerase 1 (UEL-1).